A 147-amino-acid polypeptide reads, in one-letter code: Hemoglobin subunit epsilon (147 aa).

The region spanning 3–147 (HFTAEEKSTI…VATALAHKYH (145 aa)) is the Globin domain. Residues Ser-14 and Ser-51 each carry the phosphoserine modification. The heme b site is built by His-64 and His-93.

This sequence belongs to the globin family. As to quaternary structure, heterotetramer of two alpha chains and two epsilon chains in early embryonic hemoglobin Gower-2; two zeta chains and two epsilon chains in early embryonic hemoglobin Gower-1. Red blood cells.

Its function is as follows. The epsilon chain is a beta-type chain of early mammalian embryonic hemoglobin. The sequence is that of Hemoglobin subunit epsilon (HBE1) from Microcebus murinus (Gray mouse lemur).